The following is an 861-amino-acid chain: Xylan 1,4-beta-xylosidase (861 aa).

Positions 1-19 (MKYQLFLSLALCVGLGASA) are cleaved as a signal peptide. Aspartate 269 functions as the Nucleophile in the catalytic mechanism. Positions 458–600 (DGKKGLKGTF…DYQETIAQLK (143 aa)) constitute a PA14 domain. Glutamate 616 acts as the Proton donor/acceptor in catalysis.

The protein belongs to the glycosyl hydrolase 3 family. In terms of assembly, exists as a large polymeric species, presumably as a homononamer.

The enzyme catalyses Hydrolysis of (1-&gt;4)-beta-D-xylans, to remove successive D-xylose residues from the non-reducing termini.. It carries out the reaction Hydrolysis of terminal non-reducing alpha-L-arabinofuranoside residues in alpha-L-arabinosides.. It participates in glycan degradation; xylan degradation. Involved in degradation of plant cell wall polysaccharides. Has beta-xylosidase activity via its capacity to hydrolyze glycosidic linkages of beta-1,4-xylo-oligosaccharides of various lengths (X2 to X6), releasing xylose monomers. To a much lesser extent, also has alpha-L-arabinofuranosidase activity. Does not possess beta-D-glucosidase activity. Acts synergistically with Xyn10D-Fae1A to increase the release of xylose from xylan. The protein is Xylan 1,4-beta-xylosidase of Xylanibacter ruminicola (strain ATCC 19189 / DSM 19721 / CIP 105475 / JCM 8958 / 23) (Prevotella ruminicola).